The following is a 695-amino-acid chain: GATA zinc finger domain-containing protein 16 (695 aa).

Disordered regions lie at residues 82 to 111, 134 to 304, and 422 to 472; these read SPIL…SNNA, VVNS…QQDK, and NNQF…KMRY. Low complexity-rich tracts occupy residues 87 to 111 and 140 to 149; these read SQQQ…SNNA and KTTTTNNKPP. Residues 150–174 are a coiled coil; the sequence is KQSKRKEKERLEEEKQTVAQQQQYQ. Positions 155–165 are enriched in basic and acidic residues; it reads KEKERLEEEKQ. The segment covering 199–209 has biased composition (polar residues); sequence VSTTPYGNSQF. A compositionally biased stretch (low complexity) spans 210–298; it reads NNNNNNNNNN…NSNSNNNNNN (89 aa). Residues 422–433 are compositionally biased toward polar residues; the sequence is NNQFSGDKQSAL. The segment covering 434-446 has biased composition (low complexity); the sequence is NNVKNSKGGNTNN. Residues 479–504 form a GATA-type zinc finger; that stretch reads CHTCGVTNTPEWRRGPNGAKTLCNAC. Positions 523–646 are disordered; the sequence is NSTGVNITEP…TTNSITTPTT (124 aa). Low complexity-rich tracts occupy residues 544-556 and 564-646; these read DNNN…SDSN and GSNN…TPTT.

This chain is GATA zinc finger domain-containing protein 16 (gtaP), found in Dictyostelium discoideum (Social amoeba).